The chain runs to 136 residues: Keratin-associated protein 4-2 (136 aa).

A run of 20 repeats spans residues 5–9 (CCGSV), 20–24 (CCRPS), 25–29 (CCQTT), 30–34 (CCRTT), 35–39 (CCRPS), 40–44 (CCVSS), 45–49 (CCRPQ), 50–54 (CCQSV), 55–59 (CCQPT), 60–64 (CCSPS), 65–69 (CCQTT), 70–74 (CCRTT), 75–79 (CCRPS), 80–84 (CCVSS), 90–94 (CCQSV), 95–99 (YCQPT), 100–104 (CCRPS), 110–114 (CCRTT), 120–124 (CCVST), and 125–129 (CCRPT). A 20 X 5 AA repeats OF C-C-[GRQVS]-[SPT]-[VSTQ] region spans residues 5-129 (CCGSVCSDQG…CCVSTCCRPT (125 aa)).

The protein belongs to the KRTAP type 4 family. Interacts with hair keratins.

In terms of biological role, in the hair cortex, hair keratin intermediate filaments are embedded in an interfilamentous matrix, consisting of hair keratin-associated proteins (KRTAP), which are essential for the formation of a rigid and resistant hair shaft through their extensive disulfide bond cross-linking with abundant cysteine residues of hair keratins. The matrix proteins include the high-sulfur and high-glycine-tyrosine keratins. The sequence is that of Keratin-associated protein 4-2 (KRTAP4-2) from Homo sapiens (Human).